Here is a 333-residue protein sequence, read N- to C-terminus: Autoinducer 2 import system permease protein LsrD (333 aa).

A run of 10 helical transmembrane segments spans residues 7–27 (YGWELTLAALLVLEILLFGLS), 45–65 (ICIGIVALPLTMVIVSGGIDI), 67–87 (FGSTIGLCAIFLGIVFQAGVP), 90–110 (VAIPLTVLVGALCGLINAGLI), 118–138 (LVITLGTLYLFGGSALLLSGL), 162–182 (LFGLPIPLVIFMLCVLLFWLL), 212–232 (TLCMLYAMTGVASAIAAILLV), 240–260 (SDLGASFLMPAITAVVLGGAN), 261–281 (IYGGSGSILGTALAVLLVGYL), and 288–308 (IGTPNQISSALSGALLILVVV).

It belongs to the binding-protein-dependent transport system permease family. AraH/RbsC subfamily. In terms of assembly, the complex is composed of two ATP-binding proteins (LsrA), two transmembrane proteins (LsrC and LsrD) and a solute-binding protein (LsrB).

It is found in the cell inner membrane. Its function is as follows. Part of the ABC transporter complex LsrABCD involved in autoinducer 2 (AI-2) import. Probably responsible for the translocation of the substrate across the membrane. This is Autoinducer 2 import system permease protein LsrD (lsrD) from Yersinia pseudotuberculosis serotype I (strain IP32953).